The following is a 201-amino-acid chain: Recombination protein RecR (201 aa).

A C4-type zinc finger spans residues 55–70; it reads CVCCGAFCEGRTCALC. One can recognise a Toprim domain in the interval 78–173; the sequence is GIICVVERAQ…IVTRLASGIP (96 aa).

This sequence belongs to the RecR family.

Its function is as follows. May play a role in DNA repair. It seems to be involved in an RecBC-independent recombinational process of DNA repair. It may act with RecF and RecO. The chain is Recombination protein RecR from Treponema pallidum (strain Nichols).